Consider the following 371-residue polypeptide: Spermatogenic leucine zipper protein 1 (371 aa).

Coiled coils occupy residues 96-148 and 177-289; these read EVSE…TVQD and FPHI…QKEE. Ser98 carries the phosphoserine modification. Residues 110 to 120 are helix-loop-helix motif; it reads INKELVKKLLA. The basic motif stretch occupies residues 121–188; sequence SLDLGKKENA…HIQEENIRLR (68 aa). A Phosphoserine modification is found at Ser202. Residues 223–240 are compositionally biased toward polar residues; the sequence is KTLKNNGTHSPTQTNNES. The segment at 223–246 is disordered; sequence KTLKNNGTHSPTQTNNESAKQELE. The tract at residues 245-266 is leucine-zipper; sequence LEEQVKRLKEDTYSLHLIATLL.

Post-translationally, phosphorylated by MAPK1/ERK2 and MAPK3/ERK1.

It localises to the cytoplasm. The protein resides in the nucleus. Its function is as follows. Transcription factor that binds to the DNA sequence 5'-CANNTG-3'(E box) and the G-box motif. May play an important role in the regulation of cell proliferation and differentiation during spermatogenesis. The chain is Spermatogenic leucine zipper protein 1 (SPZ1) from Bos taurus (Bovine).